A 398-amino-acid polypeptide reads, in one-letter code: Acetyl-CoA acetyltransferase (398 aa).

An N-acetylserine modification is found at serine 2. Cysteine 91 functions as the Acyl-thioester intermediate in the catalytic mechanism. Positions 186 and 231 each coordinate CoA. Tyrosine 186 contributes to the K(+) binding site. K(+) is bound by residues alanine 248, alanine 249, and alanine 251. Serine 252 is a binding site for CoA. Valine 350 lines the K(+) pocket. Residues histidine 354 and cysteine 384 each act as proton acceptor in the active site.

This sequence belongs to the thiolase-like superfamily. Thiolase family. Homotetramer.

The protein localises to the cytoplasm. Its subcellular location is the cytosol. It catalyses the reaction 2 acetyl-CoA = acetoacetyl-CoA + CoA. The protein operates within metabolic intermediate biosynthesis; (R)-mevalonate biosynthesis; (R)-mevalonate from acetyl-CoA: step 1/3. Acetyl-CoA acetyltransferase; part of the first module of ergosterol biosynthesis pathway that includes the early steps of the pathway, conserved across all eukaryotes, and which results in the formation of mevalonate from acetyl-coenzyme A (acetyl-CoA). ERG10 catalyzes the formation of acetoacetyl-CoA from acetyl-CoA. The first module starts with the action of the cytosolic acetyl-CoA acetyltransferase ERG10 that catalyzes the formation of acetoacetyl-CoA. The hydroxymethylglutaryl-CoA synthase ERG13 then condenses acetyl-CoA with acetoacetyl-CoA to form HMG-CoA. The rate-limiting step of the early module is the reduction to mevalonate by the 3-hydroxy-3-methylglutaryl-coenzyme A (HMG-CoA) reductases HMG1 and HMG2 which are derived from a single ancestral HMGR gene by gene duplication. This chain is Acetyl-CoA acetyltransferase, found in Saccharomyces cerevisiae (strain ATCC 204508 / S288c) (Baker's yeast).